The sequence spans 1744 residues: Tanabin (1744 aa).

The tract at residues 1 to 12 (MEGYLASVSLGE) is head. The segment at 8–48 (VSLGEESTQMWSLNKRLEAYLSRVKALEEENELLRKEIHSL) is coil 1A. The region spanning 13-320 (ESTQMWSLNK…SLLEAESTRI (308 aa)) is the IF rod domain. The linker 1 stretch occupies residues 49–60 (RSSKSERCWKKK). Positions 61 to 156 (HHEEMMKLRD…RDHEEEKALM (96 aa)) are coil 1B. The tract at residues 157–179 (EEEIASFSQRLENFRVAPVAFKP) is linker 12. Residues 180–193 (VEVDDYARKLSEIW) form a coil 2A region. Positions 194–199 (QGAVEE) are linker 2. The interval 200–314 (YKSEVSVLEA…EVATYRSLLE (115 aa)) is coil 2B. The tail stretch occupies residues 315-1744 (AESTRIYTDY…KKALRWKRMF (1430 aa)). Basic and acidic residues-rich tracts occupy residues 341–371 (RRRQ…KNEL) and 785–815 (HSHH…DKSS). Disordered regions lie at residues 341–372 (RRRQ…NELQ), 785–816 (HSHH…KSSE), 976–996 (EENQ…DIEE), 1032–1093 (SMED…QQED), 1340–1470 (DSDL…FGDV), 1485–1506 (SGLA…SMEN), and 1560–1722 (AREK…LNGH). Residues 980–990 (LSENEGNQNFG) show a composition bias toward polar residues. The segment covering 1034 to 1056 (EDEEEQNNPETEDNIGLEQESDQ) has biased composition (acidic residues). Positions 1074–1086 (VVFKPEDMSDKSE) are enriched in basic and acidic residues. Residues 1340–1351 (DSDLESTEEQVQ) are compositionally biased toward acidic residues. Residues 1352–1367 (ETERIPFKPEDSKMEN) are compositionally biased toward basic and acidic residues. Residues 1368–1377 (ENSESEESVD) show a composition bias toward acidic residues. Positions 1386–1398 (HKSEEFEISKDYQ) are enriched in basic and acidic residues. Residues 1412 to 1421 (LEDEFEDLTE) show a composition bias toward acidic residues. Positions 1423–1432 (PDVHEEHQNN) are enriched in basic and acidic residues. The span at 1433-1442 (DDSGASTFIT) shows a compositional bias: polar residues. Residues 1445–1460 (DEDKEREVRESVSKDE) show a composition bias toward basic and acidic residues. Positions 1496 to 1505 (DNEESEDSME) are enriched in acidic residues. 3 stretches are compositionally biased toward polar residues: residues 1576–1586 (EFTNENQSASP), 1597–1621 (EDSV…TSIS), and 1629–1639 (SNISTTEQSST). Residues 1680-1691 (RSEDEELDDEGS) are compositionally biased toward acidic residues. Residues 1698 to 1709 (NDEKANGEHKDV) show a composition bias toward basic and acidic residues.

The protein belongs to the intermediate filament family. In terms of tissue distribution, growth cones of embryonic vertebrate neurons.

This Xenopus laevis (African clawed frog) protein is Tanabin.